The chain runs to 234 residues: Small ribosomal subunit protein eS4 (234 aa).

One can recognise an S4 RNA-binding domain in the interval Val37–Gly99.

It belongs to the eukaryotic ribosomal protein eS4 family.

In Haloarcula marismortui (strain ATCC 43049 / DSM 3752 / JCM 8966 / VKM B-1809) (Halobacterium marismortui), this protein is Small ribosomal subunit protein eS4 (rps4e).